The chain runs to 258 residues: Acyl-[acyl-carrier-protein]--UDP-N-acetylglucosamine O-acyltransferase (258 aa).

It belongs to the transferase hexapeptide repeat family. LpxA subfamily. As to quaternary structure, homotrimer.

The protein localises to the cytoplasm. The catalysed reaction is a (3R)-hydroxyacyl-[ACP] + UDP-N-acetyl-alpha-D-glucosamine = a UDP-3-O-[(3R)-3-hydroxyacyl]-N-acetyl-alpha-D-glucosamine + holo-[ACP]. It functions in the pathway glycolipid biosynthesis; lipid IV(A) biosynthesis; lipid IV(A) from (3R)-3-hydroxytetradecanoyl-[acyl-carrier-protein] and UDP-N-acetyl-alpha-D-glucosamine: step 1/6. In terms of biological role, involved in the biosynthesis of lipid A, a phosphorylated glycolipid that anchors the lipopolysaccharide to the outer membrane of the cell. In Ectopseudomonas mendocina (strain ymp) (Pseudomonas mendocina), this protein is Acyl-[acyl-carrier-protein]--UDP-N-acetylglucosamine O-acyltransferase.